Reading from the N-terminus, the 166-residue chain is uncharacterized protein (166 aa).

One can recognise a GIY-YIG domain in the interval aspartate 2–glutamine 82. Residues asparagine 23 to lysine 43 are disordered.

This is an uncharacterized protein from Acanthamoeba polyphaga mimivirus (APMV).